The chain runs to 632 residues: DNA ligase (632 aa).

NAD(+) contacts are provided by residues 45–49 (NEDYD) and 89–90 (SI). Lys127 functions as the N6-AMP-lysine intermediate in the catalytic mechanism. Residues Arg143, Glu174, and Lys286 each contribute to the NAD(+) site. Residues Cys374, Cys377, Cys390, and Cys396 each coordinate Zn(2+). The 72-residue stretch at 561–632 (DKRIVFTGKM…EADYLSKITM (72 aa)) folds into the BRCT domain.

The protein belongs to the NAD-dependent DNA ligase family. LigA subfamily. The cofactor is Mg(2+). Requires Mn(2+) as cofactor.

The enzyme catalyses NAD(+) + (deoxyribonucleotide)n-3'-hydroxyl + 5'-phospho-(deoxyribonucleotide)m = (deoxyribonucleotide)n+m + AMP + beta-nicotinamide D-nucleotide.. Functionally, DNA ligase that catalyzes the formation of phosphodiester linkages between 5'-phosphoryl and 3'-hydroxyl groups in double-stranded DNA using NAD as a coenzyme and as the energy source for the reaction. It is essential for DNA replication and repair of damaged DNA. The polypeptide is DNA ligase (Vesicomyosocius okutanii subsp. Calyptogena okutanii (strain HA)).